Reading from the N-terminus, the 377-residue chain is Phospho-N-acetylmuramoyl-pentapeptide-transferase (377 aa).

10 helical membrane-spanning segments follow: residues 27–47 (TAFA…YVIE), 71–91 (GTPT…TLLW), 94–114 (LSDP…AIGF), 139–159 (ILAS…GSYS), 182–202 (VPHL…IVIV), 216–236 (GLAI…TYVS), 252–272 (MVGE…GFLW), 280–300 (IFMG…VAVV), 305–325 (LLLP…ILQV), and 354–374 (KVIV…LTTL).

This sequence belongs to the glycosyltransferase 4 family. MraY subfamily. Requires Mg(2+) as cofactor.

Its subcellular location is the cell inner membrane. It catalyses the reaction UDP-N-acetyl-alpha-D-muramoyl-L-alanyl-gamma-D-glutamyl-meso-2,6-diaminopimeloyl-D-alanyl-D-alanine + di-trans,octa-cis-undecaprenyl phosphate = di-trans,octa-cis-undecaprenyl diphospho-N-acetyl-alpha-D-muramoyl-L-alanyl-D-glutamyl-meso-2,6-diaminopimeloyl-D-alanyl-D-alanine + UMP. Its pathway is cell wall biogenesis; peptidoglycan biosynthesis. In terms of biological role, catalyzes the initial step of the lipid cycle reactions in the biosynthesis of the cell wall peptidoglycan: transfers peptidoglycan precursor phospho-MurNAc-pentapeptide from UDP-MurNAc-pentapeptide onto the lipid carrier undecaprenyl phosphate, yielding undecaprenyl-pyrophosphoryl-MurNAc-pentapeptide, known as lipid I. This Acidobacterium capsulatum (strain ATCC 51196 / DSM 11244 / BCRC 80197 / JCM 7670 / NBRC 15755 / NCIMB 13165 / 161) protein is Phospho-N-acetylmuramoyl-pentapeptide-transferase.